The chain runs to 258 residues: Lyso-ornithine lipid O-acyltransferase (258 aa).

A helical membrane pass occupies residues 7–29 (LLRSARLLGLVALGLGLAAWVSL).

Belongs to the 1-acyl-sn-glycerol-3-phosphate acyltransferase family. OlsA subfamily.

It is found in the membrane. The catalysed reaction is a lyso-ornithine lipid + a fatty acyl-[ACP] = an N(2)-[(3R)-3-(acyloxy)acyl]-L-ornithine lipid + holo-[ACP]. It functions in the pathway lipid metabolism. In terms of biological role, catalyzes the second step in the formation of ornithine lipids, which are phosphorus-free membrane lipids. Uses acyl-acyl carrier protein (acyl-AcpP) as an acyl donor and converts lyso-ornithine lipid (LOL) into ornithine lipid (OL). This is Lyso-ornithine lipid O-acyltransferase from Pseudomonas aeruginosa (strain ATCC 15692 / DSM 22644 / CIP 104116 / JCM 14847 / LMG 12228 / 1C / PRS 101 / PAO1).